The primary structure comprises 476 residues: Aspartyl/glutamyl-tRNA(Asn/Gln) amidotransferase subunit B (476 aa).

The protein belongs to the GatB/GatE family. GatB subfamily. Heterotrimer of A, B and C subunits.

It catalyses the reaction L-glutamyl-tRNA(Gln) + L-glutamine + ATP + H2O = L-glutaminyl-tRNA(Gln) + L-glutamate + ADP + phosphate + H(+). The enzyme catalyses L-aspartyl-tRNA(Asn) + L-glutamine + ATP + H2O = L-asparaginyl-tRNA(Asn) + L-glutamate + ADP + phosphate + 2 H(+). In terms of biological role, allows the formation of correctly charged Asn-tRNA(Asn) or Gln-tRNA(Gln) through the transamidation of misacylated Asp-tRNA(Asn) or Glu-tRNA(Gln) in organisms which lack either or both of asparaginyl-tRNA or glutaminyl-tRNA synthetases. The reaction takes place in the presence of glutamine and ATP through an activated phospho-Asp-tRNA(Asn) or phospho-Glu-tRNA(Gln). The sequence is that of Aspartyl/glutamyl-tRNA(Asn/Gln) amidotransferase subunit B from Latilactobacillus sakei subsp. sakei (strain 23K) (Lactobacillus sakei subsp. sakei).